The following is a 476-amino-acid chain: Siroheme synthase (476 aa).

Positions 1–204 (MDYFPVFLNI…GKDQAAQDYL (204 aa)) are precorrin-2 dehydrogenase /sirohydrochlorin ferrochelatase. Residues 22-23 (SV) and 43-44 (PT) each bind NAD(+). A Phosphoserine modification is found at serine 129. Positions 218-476 (GEVYLVGAGP…GNTPGYSKHP (259 aa)) are uroporphyrinogen-III C-methyltransferase. S-adenosyl-L-methionine is bound at residue proline 227. Aspartate 250 acts as the Proton acceptor in catalysis. The Proton donor role is filled by lysine 272. Residues 303–305 (GGD), isoleucine 308, 333–334 (TA), methionine 385, and glycine 414 each bind S-adenosyl-L-methionine.

The protein in the N-terminal section; belongs to the precorrin-2 dehydrogenase / sirohydrochlorin ferrochelatase family. This sequence in the C-terminal section; belongs to the precorrin methyltransferase family.

The enzyme catalyses uroporphyrinogen III + 2 S-adenosyl-L-methionine = precorrin-2 + 2 S-adenosyl-L-homocysteine + H(+). The catalysed reaction is precorrin-2 + NAD(+) = sirohydrochlorin + NADH + 2 H(+). It carries out the reaction siroheme + 2 H(+) = sirohydrochlorin + Fe(2+). It participates in cofactor biosynthesis; adenosylcobalamin biosynthesis; precorrin-2 from uroporphyrinogen III: step 1/1. It functions in the pathway cofactor biosynthesis; adenosylcobalamin biosynthesis; sirohydrochlorin from precorrin-2: step 1/1. Its pathway is porphyrin-containing compound metabolism; siroheme biosynthesis; precorrin-2 from uroporphyrinogen III: step 1/1. The protein operates within porphyrin-containing compound metabolism; siroheme biosynthesis; siroheme from sirohydrochlorin: step 1/1. It participates in porphyrin-containing compound metabolism; siroheme biosynthesis; sirohydrochlorin from precorrin-2: step 1/1. Its function is as follows. Multifunctional enzyme that catalyzes the SAM-dependent methylations of uroporphyrinogen III at position C-2 and C-7 to form precorrin-2 via precorrin-1. Then it catalyzes the NAD-dependent ring dehydrogenation of precorrin-2 to yield sirohydrochlorin. Finally, it catalyzes the ferrochelation of sirohydrochlorin to yield siroheme. This chain is Siroheme synthase, found in Nitrosomonas eutropha (strain DSM 101675 / C91 / Nm57).